The primary structure comprises 414 residues: Multidrug resistance protein MdtG (414 aa).

The next 10 membrane-spanning stretches (helical) occupy residues 14 to 34 (LFVT…IMPF), 56 to 76 (LVFS…GSLA), 89 to 109 (ALGM…WQFL), 113 to 133 (ALLG…ATQV), 144 to 164 (TLST…GLLA), 171 to 191 (PVFF…WFYV), 219 to 239 (ILSL…IAPI), 254 to 274 (LAFV…ISAP), 288 to 308 (ILIA…FVQT), and 376 to 396 (AVFC…YWCL).

This sequence belongs to the major facilitator superfamily. DHA1 family. MdtG (TC 2.A.1.2.20) subfamily.

Its subcellular location is the cell inner membrane. This chain is Multidrug resistance protein MdtG, found in Yersinia enterocolitica serotype O:8 / biotype 1B (strain NCTC 13174 / 8081).